An 80-amino-acid polypeptide reads, in one-letter code: Metallothionein-like protein 1 (80 aa).

The protein belongs to the metallothionein superfamily. Type 15 family.

Metallothioneins have a high content of cysteine residues that bind various heavy metals. In Coffea arabica (Arabian coffee), this protein is Metallothionein-like protein 1 (METAL1).